The sequence spans 85 residues: Small ribosomal subunit protein bS16c (85 aa).

The protein belongs to the bacterial ribosomal protein bS16 family.

The protein resides in the plastid. Its subcellular location is the chloroplast. The protein is Small ribosomal subunit protein bS16c of Nicotiana tabacum (Common tobacco).